The primary structure comprises 452 residues: Elongation factor Tu, mitochondrial (452 aa).

A mitochondrion-targeting transit peptide spans 1-43 (MAAATLLRATPRFSGLCASPTPFLQGRLRPLKAPASPFLCRGL). Residues 55–251 (KPHVNVGTIG…AVDTYIPVPT (197 aa)) enclose the tr-type G domain. A G1 region spans residues 64-71 (GHVDHGKT). Residues Asp-67, Gly-69, Lys-70, Thr-71, and Thr-72 each coordinate GTP. Thr-71 contributes to the Mg(2+) binding site. The residue at position 79 (Lys-79) is an N6-acetyllysine. N6-acetyllysine; alternate is present on Lys-88. An N6-succinyllysine; alternate modification is found at Lys-88. Positions 105-109 (GITIN) are G2. Residues 126–129 (DCPG) form a G3 region. GTP is bound by residues Asn-181, Asp-184, Ser-219, Ala-220, and Leu-221. The segment at 181–184 (NKAD) is G4. Residues 219–221 (SAL) are G5. The residue at position 234 (Lys-234) is an N6-succinyllysine. Lys-256 is modified (N6-acetyllysine). Thr-278 carries the phosphothreonine modification. The residue at position 286 (Lys-286) is an N6-succinyllysine. At Ser-312 the chain carries Phosphoserine. N6-acetyllysine is present on residues Lys-361 and Lys-418.

Belongs to the TRAFAC class translation factor GTPase superfamily. Classic translation factor GTPase family. EF-Tu/EF-1A subfamily. Interacts with NLRX1. Interacts with ATG16L1.

It is found in the mitochondrion. It catalyses the reaction GTP + H2O = GDP + phosphate + H(+). Functionally, GTP hydrolase that promotes the GTP-dependent binding of aminoacyl-tRNA to the A-site of ribosomes during protein biosynthesis. Plays a role in the regulation of autophagy and innate immunity. Recruits ATG5-ATG12 and NLRX1 at mitochondria and serves as a checkpoint of the RIGI-MAVS pathway. In turn, inhibits RLR-mediated type I interferon while promoting autophagy. This chain is Elongation factor Tu, mitochondrial, found in Rattus norvegicus (Rat).